A 92-amino-acid chain; its full sequence is Small ribosomal subunit protein uS19c (92 aa).

Belongs to the universal ribosomal protein uS19 family.

The protein localises to the plastid. It localises to the cyanelle. Functionally, protein S19 forms a complex with S13 that binds strongly to the 16S ribosomal RNA. This Cyanophora paradoxa protein is Small ribosomal subunit protein uS19c (rps19).